A 219-amino-acid chain; its full sequence is Dehydration-responsive element-binding protein 1F (219 aa).

Residues 1–45 (MDTEDTSSASSSSVSPPSSPGGGHHHRLPPKRRAGRKKFRETRHP) are disordered. The span at 7–16 (SSASSSSVSP) shows a compositional bias: low complexity. Over residues 23–41 (GHHHRLPPKRRAGRKKFRE) the composition is skewed to basic residues. The segment at residues 46–105 (VYRGVRARAGGSRWVCEVREPQAQARIWLGTYPTPEMAARAHDVAAIALRGERGAELNFP) is a DNA-binding region (AP2/ERF). The disordered stretch occupies residues 134–161 (RRPPPPLALPEDPQEGTSGGGATATSGR).

Belongs to the AP2/ERF transcription factor family. ERF subfamily. In terms of tissue distribution, mostly expressed in developing seeds and apices.

The protein resides in the nucleus. In terms of biological role, transcriptional activator that binds specifically to the DNA sequence 5'-[AG]CCGAC-3'. Binding to the C-repeat/DRE element mediates high salinity- and dehydration-inducible transcription. This is Dehydration-responsive element-binding protein 1F (DREB1F) from Oryza sativa subsp. indica (Rice).